A 750-amino-acid polypeptide reads, in one-letter code: Phosphate transporter PHO1 homolog 7 (750 aa).

Residues 1–298 (MKFGKDFVRQ…SRSAAKPYME (298 aa)) enclose the SPX domain. Residues 1 to 350 (MKFGKDFVRQ…KVKKEKHRIT (350 aa)) are Cytoplasmic-facing. Residues 351–371 (FSTGFFVGCTVSLVVALVMFI) form a helical membrane-spanning segment. Residues 372–391 (HARNIMGAVGHKVYMETMFP) lie on the Extracellular side of the membrane. A helical transmembrane segment spans residues 392–412 (LYSLFAFVVLHMIMYASNIYF). The Cytoplasmic segment spans residues 413–435 (WKRYRVNYPFIFGFKEGTELGYR). A helical transmembrane segment spans residues 436–456 (HVLLLSFGLGTLALCAVLINL). Over 457–472 (DMEMDPNTNDYKTMTE) the chain is Extracellular. A helical membrane pass occupies residues 473 to 493 (LLPMFILALVVAILFCPFNIF). The Cytoplasmic segment spans residues 494–622 (YRSSRVFFLM…YSFNRGNIWK (129 aa)). An EXS domain is found at 557 to 750 (RSSDVYSTFY…NYNEEEDRDS (194 aa)). A helical membrane pass occupies residues 623 to 643 (ISAWVFSALATFYGTYWDIVF). Residues 644-666 (DWGLLHRPSKHLLREKLLVPHKA) lie on the Extracellular side of the membrane. The chain crosses the membrane as a helical span at residues 667-687 (VYYVAIVLNIVLRMAWLQTVL). Residues 688–750 (DFNLSFLHRE…NYNEEEDRDS (63 aa)) are Cytoplasmic-facing.

The protein belongs to the SYG1 (TC 2.A.94) family. In terms of tissue distribution, expressed in root tips, vascular cylinders of roots and filaments, leaf hydathodes, stem, receptacle and stigma apex.

The protein localises to the cell membrane. In terms of biological role, may transport inorganic phosphate (Pi). This chain is Phosphate transporter PHO1 homolog 7 (PHO1-H7), found in Arabidopsis thaliana (Mouse-ear cress).